We begin with the raw amino-acid sequence, 72 residues long: Guanine nucleotide-binding protein G(I)/G(S)/G(O) subunit gamma-12 (72 aa).

Serine 2 is modified (N-acetylserine). Phosphoserine is present on residues serine 10 and serine 26. Tyrosine 42 carries the phosphotyrosine modification. The residue at position 49 (serine 49) is a Phosphoserine. Cysteine 69 is modified (cysteine methyl ester). Cysteine 69 is lipidated: S-geranylgeranyl cysteine. The propeptide at 70-72 (IIL) is removed in mature form.

It belongs to the G protein gamma family. G proteins are composed of 3 units, alpha, beta and gamma.

It is found in the cell membrane. Its function is as follows. Guanine nucleotide-binding proteins (G proteins) are involved as a modulator or transducer in various transmembrane signaling systems. The beta and gamma chains are required for the GTPase activity, for replacement of GDP by GTP, and for G protein-effector interaction. The sequence is that of Guanine nucleotide-binding protein G(I)/G(S)/G(O) subunit gamma-12 (Gng12) from Mus musculus (Mouse).